The chain runs to 274 residues: Exosome complex component Rrp42 (274 aa).

Belongs to the RNase PH family. Rrp42 subfamily. As to quaternary structure, component of the archaeal exosome complex. Forms a hexameric ring-like arrangement composed of 3 Rrp41-Rrp42 heterodimers. The hexameric ring associates with a trimer of Rrp4 and/or Csl4 subunits.

It localises to the cytoplasm. Its function is as follows. Non-catalytic component of the exosome, which is a complex involved in RNA degradation. Contributes to the structuring of the Rrp41 active site. This is Exosome complex component Rrp42 from Pyrobaculum aerophilum (strain ATCC 51768 / DSM 7523 / JCM 9630 / CIP 104966 / NBRC 100827 / IM2).